The chain runs to 403 residues: MQIYLVGGAVRDQLLQLPVYDRDWVVVGSSPQAMLAAGFQAVGKDFPVFLHPNSKEEHALARTERKTSVGYTGFACHYAPDVTLEEDLLRRDLTINAMAQDNSGQLIDPYGGQRDLAAKVLRHVSPAFVEDPLRVLRVARFAAKLHHLGFTVAEETMQLMAKIAQSGELQHLTAERVWQEWHKSLSAHHPEMFLQVLRDCGALAVVLPEIDRLFGVPQPEKWHPEIDTGIHTLMVAKQAAQLSDSLLVRFAAQVHDLGKGVTPPSEWPRHKLHCHTGLNIIESLCERIRVPNEFRDLALAVCAQHSNIHRADELKPTTKLKVLGLLDVWRKPERLEQVLLCCEADHRGRLGLESEPYPQREIFLRAYQAALGVAVQAVIADGFQGKHIKEELDKRRVSAIEAL.

ATP contacts are provided by Gly-8 and Arg-11. Positions 8 and 11 each coordinate CTP. Mg(2+)-binding residues include Asp-21 and Asp-23. Positions 91, 137, and 140 each coordinate ATP. CTP-binding residues include Arg-91, Arg-137, and Arg-140. Residues 228-329 (TGIHTLMVAK…LKVLGLLDVW (102 aa)) form the HD domain.

Belongs to the tRNA nucleotidyltransferase/poly(A) polymerase family. Bacterial CCA-adding enzyme type 1 subfamily. Monomer. Can also form homodimers and oligomers. Mg(2+) is required as a cofactor. Ni(2+) serves as cofactor.

The enzyme catalyses a tRNA precursor + 2 CTP + ATP = a tRNA with a 3' CCA end + 3 diphosphate. It catalyses the reaction a tRNA with a 3' CCA end + 2 CTP + ATP = a tRNA with a 3' CCACCA end + 3 diphosphate. Catalyzes the addition and repair of the essential 3'-terminal CCA sequence in tRNAs without using a nucleic acid template. Adds these three nucleotides in the order of C, C, and A to the tRNA nucleotide-73, using CTP and ATP as substrates and producing inorganic pyrophosphate. tRNA 3'-terminal CCA addition is required both for tRNA processing and repair. Also involved in tRNA surveillance by mediating tandem CCA addition to generate a CCACCA at the 3' terminus of unstable tRNAs. While stable tRNAs receive only 3'-terminal CCA, unstable tRNAs are marked with CCACCA and rapidly degraded. In Vibrio cholerae serotype O1 (strain ATCC 39315 / El Tor Inaba N16961), this protein is Multifunctional CCA protein.